The primary structure comprises 274 residues: Receptor-like protein 44 (274 aa).

Residues 1–24 (MTRSHRLLLLLLLIFQTAQRLTTA) form the signal peptide. The Extracellular segment spans residues 25-223 (DPNDEACLKN…PLQEMMMKSK (199 aa)). Residues asparagine 48, asparagine 82, and asparagine 95 are each glycosylated (N-linked (GlcNAc...) asparagine). LRR repeat units follow at residues 96 to 121 (CTNL…QYLV), 123 to 144 (LAVL…LALC), 145 to 168 (AYLN…LGLL), and 169 to 192 (ARLS…LSNR). Asparagine 127 is a glycosylation site (N-linked (GlcNAc...) asparagine). Residues asparagine 191 and asparagine 200 are each glycosylated (N-linked (GlcNAc...) asparagine). A helical transmembrane segment spans residues 224 to 244 (GLSVMAIVGIGLGSGIASLMI). Residues 245–274 (SFTGVCLWLRITEKKIVEEEGKISQSMPDY) are Cytoplasmic-facing.

It belongs to the RLP family.

It is found in the cell membrane. The sequence is that of Receptor-like protein 44 from Arabidopsis thaliana (Mouse-ear cress).